Reading from the N-terminus, the 397-residue chain is S-adenosylmethionine:tRNA ribosyltransferase-isomerase (397 aa).

Belongs to the QueA family. As to quaternary structure, monomer.

It is found in the cytoplasm. The catalysed reaction is 7-aminomethyl-7-carbaguanosine(34) in tRNA + S-adenosyl-L-methionine = epoxyqueuosine(34) in tRNA + adenine + L-methionine + 2 H(+). The protein operates within tRNA modification; tRNA-queuosine biosynthesis. Transfers and isomerizes the ribose moiety from AdoMet to the 7-aminomethyl group of 7-deazaguanine (preQ1-tRNA) to give epoxyqueuosine (oQ-tRNA). The sequence is that of S-adenosylmethionine:tRNA ribosyltransferase-isomerase from Nostoc sp. (strain PCC 7120 / SAG 25.82 / UTEX 2576).